The sequence spans 170 residues: Brassinosteroid-responsive RING protein 1 (170 aa).

Residues 15–37 traverse the membrane as a helical segment; that stretch reads LFVQTLSILGFIRTIVFSIFRFL. The segment at 94–137 adopts an RING-type; atypical zinc-finger fold; that stretch reads CAVCLYEFEGEQEIRWLRNCRHIFHRSCLDRWMDHDQKTCPLCR.

It belongs to the RING-type zinc finger family. Highly expressed in stems, rosette leaves and siliques, and moderately expressed in roots, cauline leaves and flower. Detected at low levels in seeds.

It localises to the membrane. Functionally, may be involved in the brassinosteroids (BRs) signaling pathway and regulate the growth and development of rosette leaves. Seems to prevent over development of leaves and inflorescence stems. This Arabidopsis thaliana (Mouse-ear cress) protein is Brassinosteroid-responsive RING protein 1.